A 147-amino-acid chain; its full sequence is Spermidine export protein MdtJ (147 aa).

4 helical membrane passes run 1–21 (MIYW…TLSM), 31–51 (TGHI…SLAV), 54–74 (VALG…ITIF), and 81–101 (ETLS…ILLV). Over residues 105–117 (TRKPKQPNRHRGN) the composition is skewed to basic residues. A disordered region spans residues 105–147 (TRKPKQPNRHRGNRPPSVQGLKTQTTGHHKGVAVESGEHHAAA).

The protein belongs to the drug/metabolite transporter (DMT) superfamily. Small multidrug resistance (SMR) (TC 2.A.7.1) family. MdtJ subfamily. In terms of assembly, forms a complex with MdtI.

The protein localises to the cell inner membrane. In terms of biological role, catalyzes the excretion of spermidine. The polypeptide is Spermidine export protein MdtJ (Yersinia pseudotuberculosis serotype O:3 (strain YPIII)).